The primary structure comprises 97 residues: uncharacterized protein (97 aa).

Helical transmembrane passes span 5-25, 27-47, and 77-97; these read TLVA…SLSV, MVFV…LICY, and IISI…VFIL.

It is found in the membrane. This is an uncharacterized protein from Saccharomyces cerevisiae (strain ATCC 204508 / S288c) (Baker's yeast).